Here is a 342-residue protein sequence, read N- to C-terminus: S-adenosylmethionine:tRNA ribosyltransferase-isomerase (342 aa).

It belongs to the QueA family. As to quaternary structure, monomer.

The protein resides in the cytoplasm. The enzyme catalyses 7-aminomethyl-7-carbaguanosine(34) in tRNA + S-adenosyl-L-methionine = epoxyqueuosine(34) in tRNA + adenine + L-methionine + 2 H(+). It participates in tRNA modification; tRNA-queuosine biosynthesis. Its function is as follows. Transfers and isomerizes the ribose moiety from AdoMet to the 7-aminomethyl group of 7-deazaguanine (preQ1-tRNA) to give epoxyqueuosine (oQ-tRNA). The chain is S-adenosylmethionine:tRNA ribosyltransferase-isomerase from Streptococcus pyogenes serotype M2 (strain MGAS10270).